The primary structure comprises 281 residues: MASLRFSVTFPALFSLLLSLWVVDACTSRKLISNNEQEGQNISHLFKDGEFEDPTMYMFFKISDLKLGTKLPIYFNKNDLRKVPPLLTRQEADLIPFSESNLDFLLNHFSISKDSPQGEAMKETLQRCDFKAIEGEYKFCGTSLESMLDLAKKTIASNADLKVMTTKVMVPDQNRISYALHNYTFAEVPKELDGIKVLGCHRMPYPYVVYYCHGHKSGTKVFEVNLMSDDGIQLVVGPAVCHMDTSMWNADHVAFKVLKIEPRSAPVCHFFPLDNIVWVSK.

The first 25 residues, 1–25, serve as a signal peptide directing secretion; the sequence is MASLRFSVTFPALFSLLLSLWVVDA. Residues 59–281 form the BURP domain; the sequence is FFKISDLKLG…PLDNIVWVSK (223 aa).

Expressed in the radicle of germinating seeds 2 days post-imbibition (DPI) and in roots of 30-DPI young plants. Expressed in the embryo and seed coat tissues of developing seeds. The protein accumulates only in seeds and only long after transcript accumulation becomes evident.

Its subcellular location is the protein storage vacuole. This is BURP domain-containing protein BNM2C from Brassica napus (Rape).